The chain runs to 217 residues: MRGLGTESLRARGALKAAIAAVAGLAVLGLSVSACGTGGTGARDEGPAGSDSVAAGAATPTVSPSKAPKSVDAVKLVKDDPKVGAAVKRALKPCVADEYPVDVSYGDLTGGSADDIVVNVMTCGDAVGIGSYVYREQGHSYENVFRAEEPPVYAEIDRGELVVTQQMYEKDDPVSYPSSEEVITYSWSANRFSEESRTHTEYSNAVGGTDSATPAPN.

An N-terminal signal peptide occupies residues 1 to 34; that stretch reads MRGLGTESLRARGALKAAIAAVAGLAVLGLSVSA. Cys-35 carries N-palmitoyl cysteine lipidation. Residue Cys-35 is the site of S-diacylglycerol cysteine attachment. Disordered stretches follow at residues 39–66 and 192–217; these read GTGARDEGPAGSDSVAAGAATPTVSPSK and FSEESRTHTEYSNAVGGTDSATPAPN.

The protein resides in the cell membrane. Its function is as follows. May be involved in the stabilization of the cell envelope or may interact with the sensor protein CseC to modulate its activity, in response to cell envelope stress. This chain is Lipoprotein CseA (cseA), found in Streptomyces avermitilis (strain ATCC 31267 / DSM 46492 / JCM 5070 / NBRC 14893 / NCIMB 12804 / NRRL 8165 / MA-4680).